The sequence spans 752 residues: Glutamate carboxypeptidase 2 (752 aa).

The Cytoplasmic portion of the chain corresponds to 1–22; the sequence is MWNALQDRDSAEVLGHRQRWLR. S10 is modified (phosphoserine). A helical; Signal-anchor for type II membrane protein membrane pass occupies residues 23–44; that stretch reads VGTLVLALTGTFLIGFLFGWFI. At 45-752 the chain is on the extracellular side; it reads KPSNEATGNV…AAAETLREVA (708 aa). N-linked (GlcNAc...) asparagine glycans are attached at residues N78, N123, and N155. Residues R212 and N259 each coordinate substrate. 2 residues coordinate Ca(2+): T271 and Y274. Positions 276–589 are NAALADase; that stretch reads ANEHAYRHEL…QVRGAMVFEL (314 aa). N338 carries N-linked (GlcNAc...) asparagine glycosylation. The Zn(2+) site is built by H379 and D389. E426 is a binding site for substrate. E426 (nucleophile; for NAALADase activity) is an active-site residue. E427 provides a ligand contact to Zn(2+). Ca(2+)-binding residues include E435 and E438. A Zn(2+)-binding site is contributed by D455. N-linked (GlcNAc...) asparagine glycosylation is found at N461 and N478. Substrate contacts are provided by residues 519–520, N521, 536–538, Y554, and 554–555; these read SG, RAR, and YH. H555 serves as a coordination point for Zn(2+). An N-linked (GlcNAc...) asparagine glycan is attached at N615. Catalysis depends on S630, which acts as the Charge relay system. The N-linked (GlcNAc...) asparagine glycan is linked to N640. Active-site charge relay system residues include D668 and H691. Residue 701-702 coordinates substrate; the sequence is KY. N722 carries N-linked (GlcNAc...) asparagine glycosylation.

This sequence belongs to the peptidase M28 family. M28B subfamily. In terms of assembly, homodimer. Zn(2+) serves as cofactor. In terms of tissue distribution, expressed predominantly in the hippocampal region of the brain and in kidney. Lower levels in the ovary, testis and mandibular gland.

Its subcellular location is the cell membrane. The enzyme catalyses Release of an unsubstituted, C-terminal glutamyl residue, typically from Ac-Asp-Glu or folylpoly-gamma-glutamates.. The NAALADase and folate hydrolase activities are inhibited by quisqualic acid. Functionally, has both folate hydrolase and N-acetylated-alpha-linked-acidic dipeptidase (NAALADase) activity. Has a preference for tri-alpha-glutamate peptides. In the intestine, required for the uptake of folate. In the brain, modulates excitatory neurotransmission through the hydrolysis of the neuropeptide, N-aceylaspartylglutamate (NAAG), thereby releasing glutamate. Its function is as follows. Also exhibits a dipeptidyl-peptidase IV type activity. In vitro, cleaves Gly-Pro-AMC. This Mus musculus (Mouse) protein is Glutamate carboxypeptidase 2 (Folh1).